The chain runs to 149 residues: Nucleoside diphosphate kinase (149 aa).

ATP-binding residues include Lys9, Phe57, Arg85, Thr91, Arg102, and Asn112. Catalysis depends on His115, which acts as the Pros-phosphohistidine intermediate.

The protein belongs to the NDK family. It depends on Mg(2+) as a cofactor.

The protein resides in the cytoplasm. The enzyme catalyses a 2'-deoxyribonucleoside 5'-diphosphate + ATP = a 2'-deoxyribonucleoside 5'-triphosphate + ADP. It catalyses the reaction a ribonucleoside 5'-diphosphate + ATP = a ribonucleoside 5'-triphosphate + ADP. Functionally, major role in the synthesis of nucleoside triphosphates other than ATP. The ATP gamma phosphate is transferred to the NDP beta phosphate via a ping-pong mechanism, using a phosphorylated active-site intermediate. The protein is Nucleoside diphosphate kinase of Methanospirillum hungatei JF-1 (strain ATCC 27890 / DSM 864 / NBRC 100397 / JF-1).